Reading from the N-terminus, the 187-residue chain is Probable nicotinate-nucleotide adenylyltransferase (187 aa).

It belongs to the NadD family.

The enzyme catalyses nicotinate beta-D-ribonucleotide + ATP + H(+) = deamido-NAD(+) + diphosphate. Its pathway is cofactor biosynthesis; NAD(+) biosynthesis; deamido-NAD(+) from nicotinate D-ribonucleotide: step 1/1. Functionally, catalyzes the reversible adenylation of nicotinate mononucleotide (NaMN) to nicotinic acid adenine dinucleotide (NaAD). The polypeptide is Probable nicotinate-nucleotide adenylyltransferase (Anaeromyxobacter dehalogenans (strain 2CP-C)).